A 358-amino-acid polypeptide reads, in one-letter code: Insulin gene enhancer protein isl-2b (358 aa).

2 consecutive LIM zinc-binding domains span residues Cys-27 to Asp-80 and Cys-89 to His-143. A DNA-binding region (homeobox) is located at residues Thr-191–Ser-250. Positions Glu-325–Ser-335 are enriched in low complexity. The segment at Glu-325–Thr-358 is disordered. Over residues Asp-336 to Thr-358 the composition is skewed to polar residues.

It localises to the nucleus. Functionally, binds to one of the cis-acting domain of the insulin gene enhancer. May be involved in the regional specification of the myotome and also in target recognition by the caudal primary neuron. The chain is Insulin gene enhancer protein isl-2b (isl2b) from Danio rerio (Zebrafish).